The chain runs to 314 residues: Secreted frizzled-related protein 1 (314 aa).

A signal peptide spans 1–31 (MGVGRSEGGRRGAALGVLLALGVALLAVGSA). Residues 53–169 (TKPHQCVAIP…FPQDYVCIAM (117 aa)) form the FZ domain. Intrachain disulfides connect cysteine 58/cysteine 121, cysteine 68/cysteine 114, cysteine 105/cysteine 140, cysteine 129/cysteine 166, and cysteine 133/cysteine 157. Asparagine 173 carries an N-linked (GlcNAc...) asparagine glycan. Cystine bridges form between cysteine 186/cysteine 256, cysteine 189/cysteine 258, and cysteine 203/cysteine 306. The region spanning 186-306 (CPPCDNEMKS…FMKKVKAPDC (121 aa)) is the NTR domain.

This sequence belongs to the secreted frizzled-related protein (sFRP) family.

The protein localises to the secreted. In terms of biological role, soluble frizzled-related proteins (sFRPS) function as modulators of Wnt signaling through direct interaction with Wnts. They have a role in regulating cell growth and differentiation in specific cell types. This is Secreted frizzled-related protein 1 (SFRP1) from Gallus gallus (Chicken).